The primary structure comprises 408 residues: DNA primase DnaG (408 aa).

Positions 166-241 (EEIIIVEGRA…KIDYIARAPP (76 aa)) constitute a Toprim domain. Mg(2+) is bound by residues Glu-172, Asp-215, and Asp-217.

Belongs to the archaeal DnaG primase family. Forms a ternary complex with MCM helicase and DNA. Component of the archaeal exosome complex. Requires Mg(2+) as cofactor.

The catalysed reaction is ssDNA + n NTP = ssDNA/pppN(pN)n-1 hybrid + (n-1) diphosphate.. In terms of biological role, RNA polymerase that catalyzes the synthesis of short RNA molecules used as primers for DNA polymerase during DNA replication. Also part of the exosome, which is a complex involved in RNA degradation. Acts as a poly(A)-binding protein that enhances the interaction between heteromeric, adenine-rich transcripts and the exosome. This chain is DNA primase DnaG, found in Desulfurococcus amylolyticus (strain DSM 18924 / JCM 16383 / VKM B-2413 / 1221n) (Desulfurococcus kamchatkensis).